Consider the following 463-residue polypeptide: MTIEKNLSDVQQKYADQFQEDVVKSFQTGYGITPDTQIDAGALRREILDDQITMLTWTNEDLIFYRDISRRPAQSTVVKYDQYLRHGNVGHSRFVKEIGVAPVSDPNIRQKTVSMKYVSDTKNMSIASGLVNNIADPSQILTEDAIAVVAKTIEWASFYGDASLTSEVEGEGLEFDGLAKLIDKNNVINAKGNQLTEKHLNEAAVRIGKGFGTATDAYMPIGVHADFVNSILGRQMQLMQDNSGNVNTGYSVNGFYSSRGFIKLHGSTVMENELILDESLQPLPNAPQPAKVTATVETKQKGAFENEEDRAGLSYKVVVNSDDAQSAPSEEVTATVSNVDDGVKLSISVNAMYQQQPQFVSIYRQGKETGMYFLIKRVPVKDAQEDGTIVFVDKNETLPETADVFVGEMSPQVVHLFELLPMMKLPLAQINASITFAVLWYGALALRAPKKWARIKNVRYIAV.

Positions 1–24 (MTIEKNLSDVQQKYADQFQEDVVK) are excised as a propeptide.

The protein localises to the virion. Assembles to form an icosahedral capsid. This is Major capsid protein from Staphylococcus aureus.